The sequence spans 840 residues: Lysine-specific demethylase JMJ27 (840 aa).

Positions 1-10 are enriched in basic residues; sequence MEKMRGKRIR. The segment at 1–52 is disordered; sequence MEKMRGKRIRPRDSGELVEDGRSESERKTRKKENDVVSKGRIGRGRGRGEVS. Residues 11 to 38 are compositionally biased toward basic and acidic residues; sequence PRDSGELVEDGRSESERKTRKKENDVVS. Zn(2+) is bound by residues cysteine 80, cysteine 83, cysteine 95, cysteine 98, cysteine 104, cysteine 107, cysteine 124, and cysteine 127. The RING-type; degenerate zinc-finger motif lies at 80–127; it reads CHHCKILTSESDLIFCSKCNKKCYCFDCIKRSYSERTHEEVRAACPFC. The JmjC domain occupies 502 to 798; sequence PKSGILNLAT…ECLRLTQEFR (297 aa). 2 residues coordinate Fe cation: histidine 546 and aspartate 548. The interval 594–678 is disordered; that stretch reads KEASELENKS…ETDGNTNERS (85 aa). The segment covering 595–620 has biased composition (basic and acidic residues); that stretch reads EASELENKSMKEVDESKKDLKDKAAN. Residues 621–631 are compositionally biased toward polar residues; it reads EEQSNNSSRPS. Residues 635 to 646 are compositionally biased toward basic and acidic residues; the sequence is EAEKVIISKEDN. Residues 647–659 are compositionally biased toward polar residues; the sequence is PTQPAVSTSVESI. A compositionally biased stretch (basic and acidic residues) spans 660 to 678; sequence QEQKLDAPKETDGNTNERS. Histidine 766 provides a ligand contact to Fe cation.

The protein belongs to the JARID1 histone demethylase family. Interacts with RPN1A. It depends on Fe(2+) as a cofactor. In terms of tissue distribution, expressed in seedlings, inflorescences, flowers and siliques, and, at low levels, in roots, leaves (including vascular bundles) and stems. Particularly observed in stomatal guard cells.

It is found in the nucleus. Its subcellular location is the cytoplasm. It carries out the reaction N(6),N(6)-dimethyl-L-lysyl(9)-[histone H3] + 2-oxoglutarate + O2 = N(6)-methyl-L-lysyl(9)-[histone H3] + formaldehyde + succinate + CO2. The enzyme catalyses N(6)-methyl-L-lysyl(9)-[histone H3] + 2-oxoglutarate + O2 = L-lysyl(9)-[histone H3] + formaldehyde + succinate + CO2. It catalyses the reaction N(6),N(6)-dimethyl-L-lysyl(9)-[histone H3] + 2 2-oxoglutarate + 2 O2 = L-lysyl(9)-[histone H3] + 2 formaldehyde + 2 succinate + 2 CO2. Histone demethylase that demethylates 'Lys-9' (H3K9me) of histone H3 with a specific activity for H3K9me1 and H3K9me2. No activity on H3K4, H3K27, H3K36, H3R2 and H4R3 methyl marks, but weak activity on H3K9me3. Involved in regulation of gene expression. Regulates flowering time by repressing the major flowering regulator CONSTANS (CO) and promoting FLOWERING LOCUS C (FLC). Exhibits a positive impact on abscisic acid- (ABA), hydrogen peroxide- (H(2)O(2)) and calcium- (Ca(2+)) induced stomatal closure. Promotes stomatal-closure-dependent drought-stress responses through its histone demethylase activity toward at least GOLS2 and RD20 loci, thus protecting them from silencing by removing H3K9me2 marks in drought conditions. Required for plant defenses leading to resistance against the virulent bacterial pathogen Pseudomonas syringae pv. tomato DC3000 (Pst DC3000) via a negative regulation of WRKY25 (a repressor of defense) and by triggering the expression of several pathogenesis-related (PR) proteins (e.g. PR1, PR3, PR4 and PR5). In Arabidopsis thaliana (Mouse-ear cress), this protein is Lysine-specific demethylase JMJ27.